Consider the following 77-residue polypeptide: Large ribosomal subunit protein eL20 (77 aa).

The protein belongs to the eukaryotic ribosomal protein eL20 family. As to quaternary structure, part of the 50S ribosomal subunit. Binds 23S rRNA.

The protein is Large ribosomal subunit protein eL20 of Thermococcus gammatolerans (strain DSM 15229 / JCM 11827 / EJ3).